The sequence spans 353 residues: Alanine racemase (353 aa).

Lysine 34 serves as the catalytic Proton acceptor; specific for D-alanine. Lysine 34 carries the post-translational modification N6-(pyridoxal phosphate)lysine. Residue arginine 128 coordinates substrate. The active-site Proton acceptor; specific for L-alanine is the tyrosine 251. Methionine 299 contributes to the substrate binding site.

The protein belongs to the alanine racemase family. The cofactor is pyridoxal 5'-phosphate.

The catalysed reaction is L-alanine = D-alanine. It participates in amino-acid biosynthesis; D-alanine biosynthesis; D-alanine from L-alanine: step 1/1. Its function is as follows. Catalyzes the interconversion of L-alanine and D-alanine. May also act on other amino acids. This Alcanivorax borkumensis (strain ATCC 700651 / DSM 11573 / NCIMB 13689 / SK2) protein is Alanine racemase (alr).